The sequence spans 139 residues: uncharacterized protein (139 aa).

The HTH marR-type domain occupies A8 to Q139. A DNA-binding region (H-T-H motif) is located at residues I53 to Q76.

This is an uncharacterized protein from Bacillus subtilis (strain 168).